The following is a 1099-amino-acid chain: MPKREDIKRILVIGSGPITIGQAAEFDYSGTQALKALKSAGYEVIIVNSNSATIMTDPEFSDAVYIEPLTVEFLEKIIEKERPDALLPTLGGQTALNLAVELAERGILDKYGVQLIGAKLDSIKKAEDRELFKETMEKAGLEVLRSRLVNNLADALETAREFGYPVIIRPSFTLGGTGGGIAFNEEELRDIVTKGLIESPVHTVLIEESVLGWKEYELEVVRDGAGNFIVVCSIENLDPMGIHTGDSITVAPAQTLTDVEYQRMRDAAHKVIDAIGIETGGSNIQFAVDPETGRMVVIEMNPRVSRSSALASKATGYPIAKVAALLAVGFTLDEIPNYITGKTMAAFEPSIDYVVVKIPRFQLEKFPGADPRLNTQMKSVGEVMAIGRTFKEALGKALRSLELDAAPKLDLEHIREHLANPTPERISYIFAAFRNGMDVEEVHELTKIDRWFLREMKACIELEEELKLKKFDVEILKKAKQWGYSDREIAEIWGVSEKEIRKMREDNRIFPVYKMVDTCAAEFEAQTPYYYSTYNGVENEAVPSDREKIMILGSGPNRIGQGIEFDYTNVHGVWAFQEEGYETIMVNSNPETVSTDYDTSDRLYFEPLTVEDVLEIVRNEKPKGVVVAFGGQTPLKIAKYLVEERVNIIGTSFESIEIAEDREKFAKLLKQIGLKCPPFGTASSVEEALRVAENLGYPVLVRPSYVLGGRAMAIVDTPQELEMYVKEAAVVSPGYPVLIDKFLEDAIELDVDVVSDGKYVWIAGLMEQIEEAGVHSGDSACVLPPVSLSEKLVEEIEETVYKLVKALKVVGVANIQLAVKDEEIYIIEANPRASRTVPFVSKAIGIPVARIAAKIMVGRNLPELLSEYFPYPTRPGVKVDKLGESEILPTPWPKMFSVKEVVIPFHKFPGTDVLLGPEMRSTGEVMGIGEDFAEAFAKAQIAAGNPLPTTGAILATVADKDKREAVPLLAHLADMGFEIYATRGTAKALQSHGVEVKVVPKVGEGRPDVIDLLEQGKISLVVITQSSDEPALVAVSHGKEPFKVEGRRTVGYMIRTTALKRKIPYLTTVESLRAAVAAIRKMKKGSIVKVRRLTDTWKM.

The carboxyphosphate synthetic domain stretch occupies residues 1 to 402 (MPKREDIKRI…ALGKALRSLE (402 aa)). Residues arginine 129, arginine 169, glycine 175, glycine 176, glutamate 208, valine 210, glutamate 215, glycine 241, isoleucine 242, histidine 243, glutamine 285, and glutamate 299 each contribute to the ATP site. In terms of domain architecture, ATP-grasp 1 spans 133-328 (KETMEKAGLE…IAKVAALLAV (196 aa)). Mg(2+)-binding residues include glutamine 285, glutamate 299, and asparagine 301. The Mn(2+) site is built by glutamine 285, glutamate 299, and asparagine 301. The interval 403-541 (LDAAPKLDLE…STYNGVENEA (139 aa)) is oligomerization domain. The carbamoyl phosphate synthetic domain stretch occupies residues 542 to 944 (VPSDREKIMI…AFAKAQIAAG (403 aa)). One can recognise an ATP-grasp 2 domain in the interval 666-857 (AKLLKQIGLK…VARIAAKIMV (192 aa)). ATP contacts are provided by arginine 702, lysine 741, leucine 743, glutamate 748, glycine 773, valine 774, histidine 775, serine 776, glutamine 816, and glutamate 828. Positions 816, 828, and 830 each coordinate Mg(2+). Residues glutamine 816, glutamate 828, and asparagine 830 each coordinate Mn(2+). Positions 945–1099 (NPLPTTGAIL…VRRLTDTWKM (155 aa)) constitute an MGS-like domain. Positions 945–1099 (NPLPTTGAIL…VRRLTDTWKM (155 aa)) are allosteric domain.

It belongs to the CarB family. In terms of assembly, composed of two chains; the small (or glutamine) chain promotes the hydrolysis of glutamine to ammonia, which is used by the large (or ammonia) chain to synthesize carbamoyl phosphate. Tetramer of heterodimers (alpha,beta)4. It depends on Mg(2+) as a cofactor. Mn(2+) is required as a cofactor.

The enzyme catalyses hydrogencarbonate + L-glutamine + 2 ATP + H2O = carbamoyl phosphate + L-glutamate + 2 ADP + phosphate + 2 H(+). The catalysed reaction is hydrogencarbonate + NH4(+) + 2 ATP = carbamoyl phosphate + 2 ADP + phosphate + 2 H(+). It participates in amino-acid biosynthesis; L-arginine biosynthesis; carbamoyl phosphate from bicarbonate: step 1/1. The protein operates within pyrimidine metabolism; UMP biosynthesis via de novo pathway; (S)-dihydroorotate from bicarbonate: step 1/3. Its function is as follows. Large subunit of the glutamine-dependent carbamoyl phosphate synthetase (CPSase). CPSase catalyzes the formation of carbamoyl phosphate from the ammonia moiety of glutamine, carbonate, and phosphate donated by ATP, constituting the first step of 2 biosynthetic pathways, one leading to arginine and/or urea and the other to pyrimidine nucleotides. The large subunit (synthetase) binds the substrates ammonia (free or transferred from glutamine from the small subunit), hydrogencarbonate and ATP and carries out an ATP-coupled ligase reaction, activating hydrogencarbonate by forming carboxy phosphate which reacts with ammonia to form carbamoyl phosphate. The chain is Carbamoyl phosphate synthase large chain from Thermotoga sp. (strain RQ2).